A 206-amino-acid chain; its full sequence is Holliday junction branch migration complex subunit RuvA (206 aa).

The interval 1 to 64 (MIGKLKGTVD…EDQIRLFGFV (64 aa)) is domain I. The domain II stretch occupies residues 65–143 (TEAEREWFRL…AFTAADPGLA (79 aa)). Residues 144-154 (RLAADVEATEA) are flexible linker. Residues 154–206 (AAGGALADAVSALVNLGYGQAQAHTAIAAAGRKAGEDATTETLIRLGLKELAK) are domain III.

This sequence belongs to the RuvA family. As to quaternary structure, homotetramer. Forms an RuvA(8)-RuvB(12)-Holliday junction (HJ) complex. HJ DNA is sandwiched between 2 RuvA tetramers; dsDNA enters through RuvA and exits via RuvB. An RuvB hexamer assembles on each DNA strand where it exits the tetramer. Each RuvB hexamer is contacted by two RuvA subunits (via domain III) on 2 adjacent RuvB subunits; this complex drives branch migration. In the full resolvosome a probable DNA-RuvA(4)-RuvB(12)-RuvC(2) complex forms which resolves the HJ.

The protein localises to the cytoplasm. In terms of biological role, the RuvA-RuvB-RuvC complex processes Holliday junction (HJ) DNA during genetic recombination and DNA repair, while the RuvA-RuvB complex plays an important role in the rescue of blocked DNA replication forks via replication fork reversal (RFR). RuvA specifically binds to HJ cruciform DNA, conferring on it an open structure. The RuvB hexamer acts as an ATP-dependent pump, pulling dsDNA into and through the RuvAB complex. HJ branch migration allows RuvC to scan DNA until it finds its consensus sequence, where it cleaves and resolves the cruciform DNA. The chain is Holliday junction branch migration complex subunit RuvA from Azorhizobium caulinodans (strain ATCC 43989 / DSM 5975 / JCM 20966 / LMG 6465 / NBRC 14845 / NCIMB 13405 / ORS 571).